Here is a 467-residue protein sequence, read N- to C-terminus: Dihydrolipoyl dehydrogenase (467 aa).

FAD-binding positions include 33-41, K50, and G113; that span reads EPKYWGGIC. Cysteines 41 and 46 form a disulfide. Residues 181–185, E204, and 269–272 each bind NAD(+); these read GAGAI and AIGF. FAD is bound by residues D312 and A320. Catalysis depends on H446, which acts as the Proton acceptor.

Belongs to the class-I pyridine nucleotide-disulfide oxidoreductase family. In terms of assembly, homodimer. Part of the PDH complex, consisting of multiple copies of AceE (E1), DlaT (E2) and Lpd (E3), and of the BCKADH complex, consisting of multiple copies of BkdA/BkdB (E1), BkdC (E2) and Lpd (E3). FAD is required as a cofactor.

It is found in the cytoplasm. It catalyses the reaction N(6)-[(R)-dihydrolipoyl]-L-lysyl-[protein] + NAD(+) = N(6)-[(R)-lipoyl]-L-lysyl-[protein] + NADH + H(+). Lipoamide dehydrogenase is a component of the alpha-ketoacid dehydrogenase complexes. Catalyzes the reoxidation of dihydrolipoyl groups which are covalently attached to the lipoate acyltransferase components (E2) of the complexes. The chain is Dihydrolipoyl dehydrogenase (lpd) from Mycobacterium leprae (strain TN).